A 437-amino-acid polypeptide reads, in one-letter code: GTPase Der (437 aa).

2 EngA-type G domains span residues 4 to 168 (PVVA…PAED) and 177 to 352 (IRVS…QAHS). GTP-binding positions include 10 to 17 (GRPNVGKS), 57 to 61 (DTGGI), 120 to 123 (NKAD), 183 to 190 (GRPNVGKS), 230 to 234 (DTAGM), and 295 to 298 (NKWD). The KH-like domain occupies 353 to 437 (MRIPTAVLND…PVRIWTRKKT (85 aa)).

Belongs to the TRAFAC class TrmE-Era-EngA-EngB-Septin-like GTPase superfamily. EngA (Der) GTPase family. As to quaternary structure, associates with the 50S ribosomal subunit.

GTPase that plays an essential role in the late steps of ribosome biogenesis. This is GTPase Der from Brevibacillus brevis (strain 47 / JCM 6285 / NBRC 100599).